We begin with the raw amino-acid sequence, 282 residues long: Bis(5'-nucleosyl)-tetraphosphatase, symmetrical (282 aa).

This sequence belongs to the Ap4A hydrolase family.

It catalyses the reaction P(1),P(4)-bis(5'-adenosyl) tetraphosphate + H2O = 2 ADP + 2 H(+). Functionally, hydrolyzes diadenosine 5',5'''-P1,P4-tetraphosphate to yield ADP. This chain is Bis(5'-nucleosyl)-tetraphosphatase, symmetrical, found in Klebsiella pneumoniae (strain 342).